The following is a 730-amino-acid chain: Hemolytic phospholipase C (730 aa).

A signal peptide (tat-type signal) is located at residues 1–38; the sequence is MTENWKFRRRTFLKHGAQAATLAGLSGLFPETLRRALA.

Belongs to the bacterial phospholipase C family. Post-translationally, predicted to be exported by the Tat system. The position of the signal peptide cleavage has not been experimentally proven.

It carries out the reaction a 1,2-diacyl-sn-glycero-3-phosphocholine + H2O = phosphocholine + a 1,2-diacyl-sn-glycerol + H(+). Its function is as follows. Hydrolyzes sphingomyelin in addition to phosphatidylcholine. The chain is Hemolytic phospholipase C (plcH) from Pseudomonas aeruginosa (strain ATCC 15692 / DSM 22644 / CIP 104116 / JCM 14847 / LMG 12228 / 1C / PRS 101 / PAO1).